Reading from the N-terminus, the 334-residue chain is Formamidase (334 aa).

Positions 14–260 (FLVAAIQFPV…WEIVTGEIYP (247 aa)) constitute a CN hydrolase domain. Glutamate 60 functions as the Proton acceptor in the catalytic mechanism. The Proton donor role is filled by lysine 133. The active-site Nucleophile is cysteine 166.

Belongs to the carbon-nitrogen hydrolase superfamily. Aliphatic amidase family.

The enzyme catalyses formamide + H2O = formate + NH4(+). In terms of biological role, is an aliphatic amidase with a restricted substrate specificity, as it only hydrolyzes formamide. This Helicobacter pylori (strain HPAG1) protein is Formamidase.